The chain runs to 292 residues: MHFMKKYLLPILVLFLAYYYYSTKEEFRPEMLQGKKVIVTGASKGIGREMAYHLSEMGAHVVLTARSEEGLQKVASRCLELGAASAHYIAGTMEDMTFAEQFVLKAGKLMGGLDMLILNHITYTSMNFFRDEIHALRKAMEVNFISYVVMSVAALPMLKQSNGSIVVVSSIAGKMAHPLVASYSASKFALDGFFSSLRREHGVTNVNVSITLCVLGLINTETAMKATSGVFNAPASPKEECALEIIKGGALRQEEVYYDSWSWTPILLGNPGRKIMEFLSMKSFTFDKLISS.

Topologically, residues 2 to 7 (HFMKKY) are cytoplasmic. The helical; Signal-anchor for type II membrane protein transmembrane segment at 8–24 (LLPILVLFLAYYYYSTK) threads the bilayer. Residues 25 to 292 (EEFRPEMLQG…SFTFDKLISS (268 aa)) are Lumenal-facing. NADP(+) contacts are provided by residues 41–67 (GASKGIGREMAYHLSEMGAHVVLTARS), 92–93 (TM), and 119–121 (NHI). N-linked (GlcNAc...) asparagine glycosylation occurs at Asn162. Position 170 (Ser170) interacts with substrate. Tyr183 functions as the Proton acceptor in the catalytic mechanism. 183–187 (YSASK) lines the NADP(+) pocket. Asn207 is a glycosylation site (N-linked (GlcNAc...) asparagine). 218–222 (INTET) is an NADP(+) binding site.

The protein belongs to the short-chain dehydrogenases/reductases (SDR) family. As to quaternary structure, homodimer. As to expression, detected in adrenal gland, liver, kidney, testis, and at lower levels in brain and lung (at protein level).

The protein localises to the endoplasmic reticulum membrane. The catalysed reaction is an 11beta-hydroxysteroid + NADP(+) = an 11-oxosteroid + NADPH + H(+). It catalyses the reaction corticosterone + NADP(+) = 11-dehydrocorticosterone + NADPH + H(+). It carries out the reaction a 7beta-hydroxysteroid + NADP(+) = a 7-oxosteroid + NADPH + H(+). The enzyme catalyses 7-oxocholesterol + NADPH + H(+) = 7beta-hydroxycholesterol + NADP(+). The catalysed reaction is 7-oxocholesterol + NADPH + H(+) = 7alpha-hydroxycholesterol + NADP(+). It catalyses the reaction chenodeoxycholate + NADP(+) = 7-oxolithocholate + NADPH + H(+). It carries out the reaction 7-oxolithocholate + NADPH + H(+) = ursodeoxycholate + NADP(+). The enzyme catalyses glycochenodeoxycholate + NADP(+) = 7-oxoglycolithocholate + NADPH + H(+). The catalysed reaction is taurochenodeoxycholate + NADP(+) = 7-oxotaurolithocholate + NADPH + H(+). It catalyses the reaction tauroursodeoxycholate + NADP(+) = 7-oxotaurolithocholate + NADPH + H(+). It carries out the reaction glycoursodeoxycholate + NADP(+) = 7-oxoglycolithocholate + NADPH + H(+). The enzyme catalyses 7-oxopregnenolone + NADPH + H(+) = 7beta-hydroxypregnenolone + NADP(+). The catalysed reaction is 3beta,7alpha-dihydroxyandrost-5-en-17-one + NADP(+) = 3beta-hydroxy-5-androstene-7,17-dione + NADPH + H(+). It catalyses the reaction 3beta-hydroxy-5-androstene-7,17-dione + NADPH + H(+) = 3beta,7beta-dihydroxyandrost-5-en-17-one + NADP(+). It carries out the reaction 3beta-hydroxy-5alpha-androstane-7,17-dione + NADPH + H(+) = 3beta,7beta-dihydroxy-5alpha-androstan-17-one + NADP(+). The protein operates within steroid metabolism. Its function is as follows. Controls the reversible conversion of biologically active glucocorticoids such as 11-dehydrocorticosterone to corticosterone in the presence of NADP(H). Participates in the corticosteroid receptor-mediated anti-inflammatory response, as well as metabolic and homeostatic processes. Bidirectional in vitro, predominantly functions as a reductase in vivo, thereby increasing the concentration of active glucocorticoids. It has broad substrate specificity, besides glucocorticoids, it accepts other steroid and sterol substrates. Interconverts 7-oxo- and 7-hydroxy-neurosteroids such as 7-oxopregnenolone and 7beta-hydroxypregnenolone, 7-oxodehydroepiandrosterone (3beta-hydroxy-5-androstene-7,17-dione) and 7beta-hydroxydehydroepiandrosterone (3beta,7beta-dihydroxyandrost-5-en-17-one), among others. Catalyzes reversibly the conversion of the major dietary oxysterol, 7-ketocholesterol (7-oxocholesterol), into the more polar 7-beta-hydroxycholesterol and 7-alpha-hhydroxycholesterol metabolites. 7-oxocholesterol is one of the most important oxysterols, it participates in several events such as induction of apoptosis, accumulation in atherosclerotic lesions, lipid peroxidation, and induction of foam cell formation. Mediates the 7-oxo reduction of 7-oxolithocholate mainly to chenodeoxycholate, and to a lesser extent to ursodeoxycholate, both in its free form and when conjugated to glycine or taurine, providing a link between glucocorticoid activation and bile acid metabolism. Catalyzes the synthesis of 7-beta-25-dihydroxycholesterol from 7-oxo-25-hydroxycholesterol in vitro, which acts as a ligand for the G-protein-coupled receptor (GPCR) Epstein-Barr virus-induced gene 2 (EBI2) and may thereby regulate immune cell migration. This chain is 11-beta-hydroxysteroid dehydrogenase 1 (HSD11B1), found in Mesocricetus auratus (Golden hamster).